A 90-amino-acid polypeptide reads, in one-letter code: c-Myc-binding protein homolog (90 aa).

This sequence belongs to the AMY1 family.

Its subcellular location is the nucleus. This Dictyostelium discoideum (Social amoeba) protein is c-Myc-binding protein homolog (mycbp).